The sequence spans 101 residues: NADH-quinone oxidoreductase subunit K (101 aa).

3 helical membrane passes run Leu4–Leu24, Ile30–Phe50, and Ile61–Leu81.

This sequence belongs to the complex I subunit 4L family. As to quaternary structure, NDH-1 is composed of 14 different subunits. Subunits NuoA, H, J, K, L, M, N constitute the membrane sector of the complex.

Its subcellular location is the cell inner membrane. It carries out the reaction a quinone + NADH + 5 H(+)(in) = a quinol + NAD(+) + 4 H(+)(out). In terms of biological role, NDH-1 shuttles electrons from NADH, via FMN and iron-sulfur (Fe-S) centers, to quinones in the respiratory chain. The immediate electron acceptor for the enzyme in this species is believed to be ubiquinone. Couples the redox reaction to proton translocation (for every two electrons transferred, four hydrogen ions are translocated across the cytoplasmic membrane), and thus conserves the redox energy in a proton gradient. This is NADH-quinone oxidoreductase subunit K from Nitrosomonas eutropha (strain DSM 101675 / C91 / Nm57).